The chain runs to 262 residues: Lectin (262 aa).

An N-terminal signal peptide occupies residues 1 to 21 (MASSVLLVLSLFLVLLLTQAS). 5 N-linked (GlcNAc...) asparagine glycosylation sites follow: N53, N82, N100, N129, and N205.

This sequence belongs to the leguminous lectin family.

Its function is as follows. This metalloglycoprotein, containing Ca(2+), Mn(2+), binds glycoconjugates containing terminal non-reducing alpha-D-GalNAc residues. The protein is Lectin of Phaseolus lunatus (Lima bean).